The primary structure comprises 90 residues: Co-chaperonin GroES (90 aa).

It belongs to the GroES chaperonin family. In terms of assembly, heptamer of 7 subunits arranged in a ring. Interacts with the chaperonin GroEL.

It localises to the cytoplasm. Together with the chaperonin GroEL, plays an essential role in assisting protein folding. The GroEL-GroES system forms a nano-cage that allows encapsulation of the non-native substrate proteins and provides a physical environment optimized to promote and accelerate protein folding. GroES binds to the apical surface of the GroEL ring, thereby capping the opening of the GroEL channel. The sequence is that of Co-chaperonin GroES from Thermosipho melanesiensis (strain DSM 12029 / CIP 104789 / BI429).